A 101-amino-acid chain; its full sequence is Small ribosomal subunit protein uS14 (101 aa).

Belongs to the universal ribosomal protein uS14 family. In terms of assembly, part of the 30S ribosomal subunit. Contacts proteins S3 and S10.

Its function is as follows. Binds 16S rRNA, required for the assembly of 30S particles and may also be responsible for determining the conformation of the 16S rRNA at the A site. This chain is Small ribosomal subunit protein uS14, found in Orientia tsutsugamushi (strain Boryong) (Rickettsia tsutsugamushi).